An 846-amino-acid polypeptide reads, in one-letter code: Iron-sulfur cluster assembly SufBD family protein Mb1496 (846 aa).

The interval 1-20 (MTLTPEASKSVAQPPTQAPL) is disordered. In terms of domain architecture, DOD-type homing endonuclease spans 388-528 (LAGYYLAEGH…LQSILARLGH (141 aa)).

This sequence belongs to the iron-sulfur cluster assembly SufBD family. In terms of processing, this protein undergoes a protein self splicing that involves a post-translational excision of the intervening region (intein) followed by peptide ligation.

The chain is Iron-sulfur cluster assembly SufBD family protein Mb1496 from Mycobacterium bovis (strain ATCC BAA-935 / AF2122/97).